Consider the following 340-residue polypeptide: 3-isopropylmalate dehydrogenase (340 aa).

Substrate contacts are provided by Arg88, Arg98, Arg122, and Asp212. Mg(2+) contacts are provided by Asp212, Asp236, and Asp240. 272 to 284 (GSAPDIAGQGIAD) contributes to the NAD(+) binding site.

The protein belongs to the isocitrate and isopropylmalate dehydrogenases family. LeuB type 2 subfamily. Homodimer. Requires Mg(2+) as cofactor. Mn(2+) is required as a cofactor.

The protein resides in the cytoplasm. It catalyses the reaction (2R,3S)-3-isopropylmalate + NAD(+) = 4-methyl-2-oxopentanoate + CO2 + NADH. The protein operates within amino-acid biosynthesis; L-leucine biosynthesis; L-leucine from 3-methyl-2-oxobutanoate: step 3/4. Its function is as follows. Catalyzes the oxidation of 3-carboxy-2-hydroxy-4-methylpentanoate (3-isopropylmalate) to 3-carboxy-4-methyl-2-oxopentanoate. The product decarboxylates to 4-methyl-2 oxopentanoate. In Corynebacterium glutamicum (strain R), this protein is 3-isopropylmalate dehydrogenase.